We begin with the raw amino-acid sequence, 195 residues long: Large ribosomal subunit protein mL58 (195 aa).

The N-terminal 18 residues, Met1–Trp18, are a transit peptide targeting the mitochondrion.

It belongs to the mitochondrion-specific ribosomal protein mL58 family. As to quaternary structure, component of the mitochondrial large ribosomal subunit (mt-LSU). Mature yeast 74S mitochondrial ribosomes consist of a small (37S) and a large (54S) subunit. The 37S small subunit contains a 15S ribosomal RNA (15S mt-rRNA) and 34 different proteins. The 54S large subunit contains a 21S rRNA (21S mt-rRNA) and 46 different proteins.

The protein resides in the mitochondrion. Functionally, component of the mitochondrial ribosome (mitoribosome), a dedicated translation machinery responsible for the synthesis of mitochondrial genome-encoded proteins, including at least some of the essential transmembrane subunits of the mitochondrial respiratory chain. The mitoribosomes are attached to the mitochondrial inner membrane and translation products are cotranslationally integrated into the membrane. This Saccharomyces cerevisiae (strain ATCC 204508 / S288c) (Baker's yeast) protein is Large ribosomal subunit protein mL58 (MRPL20).